The primary structure comprises 301 residues: UDP-N-acetylenolpyruvoylglucosamine reductase (301 aa).

Residues 30 to 194 (VGGEPDYLVF…LSAKFALAPG (165 aa)) enclose the FAD-binding PCMH-type domain. R173 is a catalytic residue. S223 serves as the catalytic Proton donor. E293 is an active-site residue.

Belongs to the MurB family. FAD is required as a cofactor.

It localises to the cytoplasm. The catalysed reaction is UDP-N-acetyl-alpha-D-muramate + NADP(+) = UDP-N-acetyl-3-O-(1-carboxyvinyl)-alpha-D-glucosamine + NADPH + H(+). It participates in cell wall biogenesis; peptidoglycan biosynthesis. In terms of biological role, cell wall formation. In Streptococcus pneumoniae (strain CGSP14), this protein is UDP-N-acetylenolpyruvoylglucosamine reductase.